Consider the following 593-residue polypeptide: DEAD-box ATP-dependent RNA helicase 18 (593 aa).

The Q motif motif lies at 16–44; it reads FSDLEPPLSGDIIEALNQSDFEFCTPVQA. In terms of domain architecture, Helicase ATP-binding spans 47-226; the sequence is IPLLCSYKDV…KAGLRNPVRV (180 aa). 60–67 provides a ligand contact to ATP; sequence AATGSGKT. The DEAD box motif lies at 174–177; it reads DEAD. The 148-residue stretch at 264–411 folds into the Helicase C-terminal domain; that stretch reads QLVDLLIKNS…ERKCSEDASD (148 aa). Residues 506–524 are compositionally biased toward basic and acidic residues; sequence QRQQNLQVRKEKRQEEKKE. The tract at residues 506-561 is disordered; it reads QRQQNLQVRKEKRQEEKKEKGKRKRVDASASNDPKKASRKLTGKQRQTIQTAEDEE.

The protein belongs to the DEAD box helicase family. DDX55/SPB4 subfamily.

It catalyses the reaction ATP + H2O = ADP + phosphate + H(+). The polypeptide is DEAD-box ATP-dependent RNA helicase 18 (RH18) (Arabidopsis thaliana (Mouse-ear cress)).